The following is a 562-amino-acid chain: Protein wntless (562 aa).

The Cytoplasmic portion of the chain corresponds to 1-13 (MSGTILENLSGRK). Residues 14-34 (LSILVSSLLLCQVACFLIGGL) form a helical membrane-spanning segment. Topologically, residues 35-239 (YAPVPAGHQI…AIHQNGGFTQ (205 aa)) are lumenal. N-linked (GlcNAc...) asparagine glycosylation is found at Asn58 and Asn103. The chain crosses the membrane as a helical span at residues 240–260 (VWLLLKSVLFPFIIGIMVWFW). Topologically, residues 261–270 (RRVHILQRSP) are cytoplasmic. The chain crosses the membrane as a helical span at residues 271-291 (ALLEYMLLYLGGALSFLNLPL). Residues 292–311 (EYLTLSFEMPYMLLLSDVRQ) lie on the Lumenal side of the membrane. A helical membrane pass occupies residues 312 to 332 (GIFYAMLLSFWLVFAGEHMLI). Over 333–344 (QDSPNKSTIRSR) the chain is Cytoplasmic. The helical transmembrane segment at 345–365 (YWKHLSAVVVGCISLFVFDIC) threads the bilayer. Residues 366–390 (ERGMQLRNPFYSIWTTPLGAKVAMS) are Lumenal-facing. A helical membrane pass occupies residues 391 to 411 (FIVLAGVSAGIYFLFLCYMVW). Residues 412–441 (KVFKDIGDKRTSLPSMSQARRLHYEGLIYR) are Cytoplasmic-facing. The helical transmembrane segment at 442-462 (FKFLMLATLLCAGLTVAGFIM) threads the bilayer. Residues 463-482 (GQMAEGHWKWNEDIEIQLTS) lie on the Lumenal side of the membrane. A helical transmembrane segment spans residues 483 to 503 (AFLTGVYGMWNIYIFALLILY). Over 504 to 562 (APSHKQWPTMRHSDETTQSNENIVASAASEEIEFSNLPSDSNPSEISSLTSFTRKVAFD) the chain is Cytoplasmic. Residues 538-562 (SNLPSDSNPSEISSLTSFTRKVAFD) are disordered. The span at 539–556 (NLPSDSNPSEISSLTSFT) shows a compositional bias: polar residues.

The protein belongs to the wntless family. Interacts with wg; in the Golgi. Interacts with Vps35, a component of the retromer complex; wls stability is regulated by Vps35.

Its subcellular location is the presynaptic cell membrane. The protein localises to the postsynaptic cell membrane. It localises to the cell membrane. The protein resides in the endoplasmic reticulum membrane. It is found in the endosome membrane. Its subcellular location is the golgi apparatus membrane. In terms of biological role, a segment polarity gene required for wingless (wg)-dependent patterning processes, acting in both wg-sending cells and wg-target cells. In non-neuronal cells wls directs wg secretion. The wls traffic loop encompasses the Golgi, the cell surface, an endocytic compartment and a retrograde route leading back to the Golgi, and involves clathrin-mediated endocytosis and the retromer complex (a conserved protein complex consisting of Vps35 and Vps26). In neuronal cells (the larval motorneuron NMJ), the wg signal moves across the synapse via the release of wls-containing exosome-like vesicles. Postsynaptic wls is required for the trafficking of fz2 through the fz2-interacting protein Grip. The sequence is that of Protein wntless from Drosophila mojavensis (Fruit fly).